We begin with the raw amino-acid sequence, 189 residues long: GTP cyclohydrolase 1 (189 aa).

3 residues coordinate Zn(2+): cysteine 79, histidine 82, and cysteine 150.

The protein belongs to the GTP cyclohydrolase I family. As to quaternary structure, toroid-shaped homodecamer, composed of two pentamers of five dimers.

The enzyme catalyses GTP + H2O = 7,8-dihydroneopterin 3'-triphosphate + formate + H(+). Its pathway is cofactor biosynthesis; 7,8-dihydroneopterin triphosphate biosynthesis; 7,8-dihydroneopterin triphosphate from GTP: step 1/1. The sequence is that of GTP cyclohydrolase 1 from Rickettsia massiliae (strain Mtu5).